The sequence spans 213 residues: Ribonuclease HII (213 aa).

Residues 18-213 (GLHAGVDEVG…RPVKERLAKR (196 aa)) form the RNase H type-2 domain. A divalent metal cation is bound by residues D24, E25, and D116.

Belongs to the RNase HII family. Mn(2+) serves as cofactor. Requires Mg(2+) as cofactor.

Its subcellular location is the cytoplasm. The enzyme catalyses Endonucleolytic cleavage to 5'-phosphomonoester.. Functionally, endonuclease that specifically degrades the RNA of RNA-DNA hybrids. This chain is Ribonuclease HII, found in Shewanella woodyi (strain ATCC 51908 / MS32).